The primary structure comprises 495 residues: Ribitol 5-phosphate transferase FKRP (495 aa).

The Cytoplasmic portion of the chain corresponds to 1–6 (MRLTRC). The helical transmembrane segment at 7 to 29 (QAALAAAITLNLLVLFYVSWLQH) threads the bilayer. The Lumenal segment spans residues 30–495 (QPRNSRARGP…PALLSLTGSG (466 aa)). A disulfide bridge links Cys168 with Cys191. N-linked (GlcNAc...) asparagine glycans are attached at residues Asn172 and Asn209. Zn(2+) is bound by residues Cys289, Cys296, Cys317, and Cys318. The zinc finger loop stretch occupies residues 289-318 (CNKETTRCFGTVVGDTPAYLYEERWTPPCC). Residues Gly345, Arg352, 359–364 (WDYDVD), 437–438 (QD), and 480–482 (NPQ) each bind CDP-L-ribitol. Positions 360, 362, and 364 each coordinate Mg(2+).

Belongs to the LicD transferase family. As to quaternary structure, homodimer; disulfide-linked. Tetramer. Forms a complex composed of FKRP, FKTN/fukutin, and RXYLT1/TMEM5. Also exists as large multimeric protein complexes. May interact with the dystrophin-glycoprotein complex (DGC). Mg(2+) serves as cofactor. Post-translationally, N-glycosylated. In terms of tissue distribution, expressed in the retina (at protein level). Expressed predominantly in skeletal muscle, placenta, and heart and relatively weakly in brain, lung, liver, kidney, and pancreas.

The protein localises to the golgi apparatus membrane. The protein resides in the secreted. It localises to the cell membrane. Its subcellular location is the sarcolemma. It is found in the rough endoplasmic reticulum. The protein localises to the cytoplasm. The enzyme catalyses 3-O-[Rib-ol-P-3-beta-D-GalNAc-(1-&gt;3)-beta-D-GlcNAc-(1-&gt;4)-(O-6-P-alpha-D-Man)]-Thr-[protein] + CDP-L-ribitol = 3-O-[Rib-ol-P-Rib-ol-P-3-beta-D-GalNAc-(1-&gt;3)-beta-D-GlcNAc-(1-&gt;4)-(O-6-P-alpha-D-Man)]-Thr-[protein] + CMP + H(+). It participates in protein modification; protein glycosylation. Its function is as follows. Catalyzes the transfer of a ribitol 5-phosphate from CDP-L-ribitol to the ribitol 5-phosphate previously attached by FKTN/fukutin to the phosphorylated O-mannosyl trisaccharide (N-acetylgalactosamine-beta-3-N-acetylglucosamine-beta-4-(phosphate-6-)mannose), a carbohydrate structure present in alpha-dystroglycan (DAG1). This constitutes the second step in the formation of the ribose 5-phosphate tandem repeat which links the phosphorylated O-mannosyl trisaccharide to the ligand binding moiety composed of repeats of 3-xylosyl-alpha-1,3-glucuronic acid-beta-1. The protein is Ribitol 5-phosphate transferase FKRP of Homo sapiens (Human).